A 465-amino-acid chain; its full sequence is Lactaldehyde dehydrogenase (465 aa).

Gly-220–Gly-225 provides a ligand contact to NAD(+). Residues Glu-240 and Cys-274 contribute to the active site.

The protein belongs to the aldehyde dehydrogenase family. Homotetramer.

It catalyses the reaction (S)-lactaldehyde + NAD(+) + H2O = (S)-lactate + NADH + 2 H(+). Its pathway is cofactor biosynthesis; coenzyme F420 biosynthesis. Its function is as follows. Involved in F420 biosynthesis through the oxidation of lactaldehyde to lactate. This is Lactaldehyde dehydrogenase from Methanococcus vannielii (strain ATCC 35089 / DSM 1224 / JCM 13029 / OCM 148 / SB).